A 660-amino-acid polypeptide reads, in one-letter code: DNA ligase (660 aa).

NAD(+) contacts are provided by residues 33-37 (DFVYD), 82-83 (SL), and glutamate 110. Lysine 112 acts as the N6-AMP-lysine intermediate in catalysis. NAD(+) contacts are provided by arginine 133, glutamate 167, lysine 281, and lysine 305. 4 residues coordinate Zn(2+): cysteine 396, cysteine 399, cysteine 412, and cysteine 417. The BRCT domain occupies 583 to 660 (DENKLLVGKK…SFEDIKSYLD (78 aa)).

The protein belongs to the NAD-dependent DNA ligase family. LigA subfamily. The cofactor is Mg(2+). Mn(2+) is required as a cofactor.

It catalyses the reaction NAD(+) + (deoxyribonucleotide)n-3'-hydroxyl + 5'-phospho-(deoxyribonucleotide)m = (deoxyribonucleotide)n+m + AMP + beta-nicotinamide D-nucleotide.. In terms of biological role, DNA ligase that catalyzes the formation of phosphodiester linkages between 5'-phosphoryl and 3'-hydroxyl groups in double-stranded DNA using NAD as a coenzyme and as the energy source for the reaction. It is essential for DNA replication and repair of damaged DNA. In Borreliella afzelii (strain PKo) (Borrelia afzelii), this protein is DNA ligase.